The primary structure comprises 185 residues: Anterior gradient protein 2 (185 aa).

Positions 1–18 are cleaved as a signal peptide; the sequence is MQTGLSLACLVLLCSVLG. The tract at residues 25 to 45 is disordered; that stretch reads PKRQAGATDTNGAAKSEPAPV.

This sequence belongs to the AGR family. As to expression, expressed in the anterior of the dorsal ectoderm from late gastrula stages onwards. Becomes restricted to the cement gland anlage at the onset of neurulation (stages 13 to 14) and expressed exclusively in the cement gland from stage 18 onwards, with transient expression in the hatching gland during tailbud stages.

Its subcellular location is the secreted. In terms of biological role, involved in cement gland formation; probably specifies dorsal ectoderm to acquire an anterior fate such as cement gland and forebrain. Signals via the FGF pathway. This Xenopus laevis (African clawed frog) protein is Anterior gradient protein 2 (ag2).